The chain runs to 419 residues: Odorant receptor 56a (419 aa).

Residues 1–41 lie on the Cytoplasmic side of the membrane; that stretch reads MFKVKDLLLSPTTFEDPIFGTHLRYFQWYGYVASKDQNRPL. The chain crosses the membrane as a helical span at residues 42-62; sequence LSLIRCTILTASIWLSCALML. Residues 63 to 76 are Extracellular-facing; the sequence is ARVFRGYENLNDGA. Residues 77–97 form a helical membrane-spanning segment; that stretch reads TSYATAVQYFAVSIAMFNAYV. Over 98-137 the chain is Cytoplasmic; it reads QRDKVISLLRVAHSDIQNLMHEADNREMELLVATQAYTRT. Residues 138–158 form a helical membrane-spanning segment; it reads ITLLIWIPSVIAGLMAYSDCI. Over 159–196 the chain is Extracellular; that stretch reads YRSLFLPKSVFNVPAVRRGEEHPILLFQLFPFGELCDN. The chain crosses the membrane as a helical span at residues 197-217; it reads FVVGYLGPWYALGLGITAIPL. Over 218–292 the chain is Cytoplasmic; that stretch reads WHTFITCLMK…FVQELQYLIC (75 aa). The helical transmembrane segment at 293–313 threads the bilayer; the sequence is VPVMADFIIFSVLICFLFFAL. Residues 314-323 lie on the Extracellular side of the membrane; it reads TVGVPSKMDY. The chain crosses the membrane as a helical span at residues 324-344; the sequence is FFMFIYLFVMAGILWIYHWHA. Residues 345-389 are Cytoplasmic-facing; sequence TLIVECHDELSLAYFSCGWYNFEMPLQKMLVFMMMHAQRPMKMRA. The helical transmembrane segment at 390–410 threads the bilayer; sequence LLVDLNLRTFIDIGRGAYSYF. Over 411-419 the chain is Extracellular; sequence NLLRSSHLY.

This sequence belongs to the insect chemoreceptor superfamily. Heteromeric odorant receptor channel (TC 1.A.69) family. Or30a subfamily. Interacts with Orco. Complexes exist early in the endomembrane system in olfactory sensory neurons (OSNs), coupling these complexes to the conserved ciliary trafficking pathway. As to expression, expressed in olfactory sensory neurons in the antenna.

Its subcellular location is the cell membrane. In terms of biological role, odorant receptor which mediates acceptance or avoidance behavior, depending on its substrates. The odorant receptor repertoire encodes a large collection of odor stimuli that vary widely in identity, intensity, and duration. May form a complex with Orco to form odorant-sensing units, providing sensitive and prolonged odorant signaling and calcium permeability. Specific receptor for geosmin, a microbial odorant that constitutes an ecologically relevant stimulus that alerts flies to the presence of harmful microbes and induces avoidance behavior. In Drosophila melanogaster (Fruit fly), this protein is Odorant receptor 56a (Or56a).